The following is a 90-amino-acid chain: uncharacterized protein (90 aa).

An N-terminal signal peptide occupies residues 1–20 (MAYKMLQVVLCSTLLIGALG).

This is an uncharacterized protein from Homo sapiens (Human).